An 84-amino-acid polypeptide reads, in one-letter code: Toxin To7 (84 aa).

A signal peptide spans 1–20 (MSIFPIVLALLLIGLEETEA). The LCN-type CS-alpha/beta domain maps to 21–83 (LDGYPLSKIN…KMYPGSSPCY (63 aa)). 4 disulfides stabilise this stretch: C32–C82, C36–C59, C42–C64, and C46–C66.

Expressed by the venom gland.

It localises to the secreted. Its function is as follows. Inhibits voltage-gated sodium channels (Nav). This chain is Toxin To7, found in Tityus obscurus (Amazonian scorpion).